Here is a 211-residue protein sequence, read N- to C-terminus: Transcription factor bHLH150 (211 aa).

Residues 1–15 (MSSEQGNGSNPSTSP) show a composition bias toward polar residues. The segment at 1-23 (MSSEQGNGSNPSTSPEVEGTKTI) is disordered. The bHLH domain occupies 135–184 (AIRGSGGSGRRRKLSAVGNRVRVLGGLVPGCRRTALPELLDETADYIAAL).

As to quaternary structure, homodimer. Interacts with PRE3 and ASK7. In terms of processing, phosphorylated by ASK7.

It localises to the nucleus. Atypical bHLH transcription factor probably unable to bind DNA. Negatively regulates brassinosteroid signaling. This is Transcription factor bHLH150 (BHLH150) from Arabidopsis thaliana (Mouse-ear cress).